We begin with the raw amino-acid sequence, 616 residues long: D-glutamate cyclase, mitochondrial (616 aa).

The N-terminal 28 residues, 1 to 28 (MPFTLHLRSRLPSAIRSLILQKKPNIRN), are a transit peptide targeting the mitochondrion.

Belongs to the D-glutamate cyclase family.

It localises to the mitochondrion matrix. The enzyme catalyses D-glutamate = 5-oxo-D-proline + H2O. Its function is as follows. D-glutamate cyclase that converts D-glutamate to 5-oxo-D-proline. The protein is D-glutamate cyclase, mitochondrial of Homo sapiens (Human).